The sequence spans 600 residues: Methionine--tRNA ligase (600 aa).

The short motif at 12–22 (PYANGPRHIGH) is the 'HIGH' region element. Positions 144, 147, 157, and 160 each coordinate Zn(2+). The 'KMSKS' region signature appears at 351–355 (KFSSS). Serine 354 is an ATP binding site.

The protein belongs to the class-I aminoacyl-tRNA synthetase family. MetG type 1 subfamily. In terms of assembly, monomer. The cofactor is Zn(2+).

The protein resides in the cytoplasm. The catalysed reaction is tRNA(Met) + L-methionine + ATP = L-methionyl-tRNA(Met) + AMP + diphosphate. Its function is as follows. Is required not only for elongation of protein synthesis but also for the initiation of all mRNA translation through initiator tRNA(fMet) aminoacylation. This chain is Methionine--tRNA ligase, found in Chloroflexus aurantiacus (strain ATCC 29364 / DSM 637 / Y-400-fl).